The following is a 141-amino-acid chain: Hemoglobin subunit alpha-A (141 aa).

Positions 1–141 (VLSAADKTNV…VGTVLTAKYR (141 aa)) constitute a Globin domain. An O2-binding site is contributed by H58. H87 provides a ligand contact to heme b.

The protein belongs to the globin family. As to quaternary structure, heterotetramer of two alpha chains and two beta chains. In terms of tissue distribution, red blood cells.

Its function is as follows. Involved in oxygen transport from the lung to the various peripheral tissues. The sequence is that of Hemoglobin subunit alpha-A (HBAA) from Turdus merula (Common blackbird).